Reading from the N-terminus, the 307-residue chain is Tyrosine recombinase XerC (307 aa).

Residues 9–95 (ETLSLAIDSF…ALRSFLDWQV (87 aa)) enclose the Core-binding (CB) domain. The Tyr recombinase domain occupies 116-296 (HLPKNMDVDE…DFQHLAKVYD (181 aa)). Active-site residues include arginine 155, lysine 179, histidine 248, arginine 251, and histidine 274. Tyrosine 283 (O-(3'-phospho-DNA)-tyrosine intermediate) is an active-site residue.

It belongs to the 'phage' integrase family. XerC subfamily. As to quaternary structure, forms a cyclic heterotetrameric complex composed of two molecules of XerC and two molecules of XerD, in which XerC interacts with XerD via its C-terminal region, XerD interacts with XerC via its C-terminal region and so on.

It localises to the cytoplasm. Its activity is regulated as follows. FtsK may regulate the catalytic switch between XerC and XerD in the heterotetrameric complex during the two steps of the recombination process. Site-specific tyrosine recombinase, which acts by catalyzing the cutting and rejoining of the recombining DNA molecules. Binds cooperatively to specific DNA consensus sequences that are separated from XerD binding sites by a short central region, forming the heterotetrameric XerC-XerD complex that recombines DNA substrates. The complex is essential to convert dimers of the bacterial chromosome into monomers to permit their segregation at cell division. It also contributes to the segregational stability of plasmids. In the complex XerC specifically exchanges the top DNA strands. The chain is Tyrosine recombinase XerC from Proteus mirabilis.